Here is a 969-residue protein sequence, read N- to C-terminus: GATOR2 complex protein Wdr59 (969 aa).

The segment at 1–24 is disordered; it reads MPPTETLRPGERGTAGGPGAGAPE. WD repeat units follow at residues 127-167, 172-211, 215-255, 258-303, and 307-351; these read GHTR…KPAL, VCMS…CPTH, AHLN…RAEK, TTMS…DPIC, and GHTD…LKLC. A Phosphothreonine modification is found at T373. The RWD domain maps to 435–538; it reads HEFSLLNTNM…RALVAAMKKK (104 aa). The C4-type zinc-finger motif lies at 891-911; that stretch reads ECRKCAKPKRTPKCEPCKRPV. Residues C892, C895, C904, C907, C917, C928, H933, H936, H939, C950, C953, C955, and C957 each contribute to the Zn(2+) site. The RING-type; atypical zinc finger occupies 912 to 960; it reads LFCVLCRLPVKGAANACLACGHGGHIDHMMQWFEKHNVCATCGCKCLER.

This sequence belongs to the WD repeat WDR59 family. Component of the GATOR complex consisting of mio, Nup44A/Seh1, Im11, Nplr3, Nplr2, Wdr24, Wdr59 and Sec13. Within the GATOR complex, probable component of the GATOR2 subcomplex which is likely composed of mio, Nup44A/Seh1, Wdr24, Wdr59 and Sec13. The GATOR2 complex associates with unmet in the absence of S-adenosyl-L-methionine; the mio-Wdr24-Nup44A subcomplex is essential and sufficient for this interaction while Wdr59 and Sec13 are dispensable. This association acts as a nutrient sensor to inhibit mTORC1 signaling in the absence of methionine.

It localises to the lysosome membrane. Its function is as follows. A component of the GATOR complex, which functions as a regulator of the amino acid-sensing branch of the mTORC1 signaling pathway. The two GATOR subcomplexes, GATOR1 and GATOR2, regulate the mTORC1 pathway in order to mediate metabolic homeostasis, female gametogenesis and the response to amino acid limitation and complete starvation. GATOR2 activates the mTORC1 signaling pathway through the inhibition of the GATOR1 subcomplex, controlling the switch to cell proliferation and growth under nutrient replete conditions and during female oocyte development. Acts as an atypical component of the GATOR2 subcomplex, which can either promote or inhibit mTORC1 signaling, depending on tissues: inhibits mTORC1 activity by preventing the activity of GATOR2 in the ovary and the eye imaginal disk brain, while it promotes mTORC1 activity in the fat body. This chain is GATOR2 complex protein Wdr59, found in Drosophila melanogaster (Fruit fly).